A 1308-amino-acid polypeptide reads, in one-letter code: Cadherin-related family member 2 (1308 aa).

A signal peptide spans 1-20; that stretch reads MAWLWLLCALLPAFMVSVTA. The Extracellular segment spans residues 21–1152; it reads NSPPSFGVNM…EPDQQKLLTS (1132 aa). 9 Cadherin domains span residues 33–124, 125–241, 242–353, 368–480, 481–586, 586–695, 695–807, 809–927, and 929–1051; these read VTLP…IPVF, LNTE…DPRF, IREF…KPEF, AQVN…RPVF, SQSL…PPVV, VRGS…LPVF, FNQS…PPTL, AASL…APYF, and PNNQ…RLQF. A helical membrane pass occupies residues 1153–1173; that stretch reads VIIGLVVSLVLVLVILITALV. At 1174–1308 the chain is on the cytoplasmic side; sequence CLRKSYHRKL…TNPGLDTTDL (135 aa). The interval 1178-1308 is mediates interaction with USH1C and MYO7B and is required for proper localization to microvilli tips and function in microvilli organization; that stretch reads SYHRKLRAMK…TNPGLDTTDL (131 aa). Ser-1245 is modified (phosphoserine). The segment at 1251-1308 is disordered; the sequence is VDLDMDSKEFKRKDLPGDPPEPDPEPLTAVLSGRSAGASEQQKKNLSFTNPGLDTTDL. A compositionally biased stretch (basic and acidic residues) spans 1255–1266; sequence MDSKEFKRKDLP. Over residues 1288–1308 the composition is skewed to polar residues; it reads ASEQQKKNLSFTNPGLDTTDL. Phosphoserine is present on Ser-1297.

Part of the IMAC/intermicrovillar adhesion complex/intermicrovillar tip-link complex composed of ANKS4B, MYO7B, USH1C, CDHR2 and CDHR5. Interacts with MAST2. Interacts (via cytoplasmic domain) with USH1C and MYO7B; required for proper localization of CDHR2 to microvilli tips and its function in brush border differentiation.

Its subcellular location is the apical cell membrane. It is found in the cell projection. The protein resides in the microvillus membrane. The protein localises to the cell junction. In terms of biological role, intermicrovillar adhesion molecule that forms, via its extracellular domain, calcium-dependent heterophilic complexes with CDHR5 on adjacent microvilli. Thereby, controls the packing of microvilli at the apical membrane of epithelial cells. Through its cytoplasmic domain, interacts with microvillus cytoplasmic proteins to form the intermicrovillar adhesion complex/IMAC. This complex plays a central role in microvilli and epithelial brush border differentiation. May also play a role in cell-cell adhesion and contact inhibition in epithelial cells. The chain is Cadherin-related family member 2 from Mus musculus (Mouse).